Reading from the N-terminus, the 276-residue chain is Phosphatidylglycerol--prolipoprotein diacylglyceryl transferase (276 aa).

The next 7 membrane-spanning stretches (helical) occupy residues 17 to 37, 59 to 79, 95 to 115, 129 to 149, 176 to 196, 202 to 222, and 237 to 257; these read LAIR…LWFG, MLFF…VLFY, WEGG…MWLF, FIAP…FING, SQLY…WLFA, MGAV…AAEF, and LSMG…MVVW. A 1,2-diacyl-sn-glycero-3-phospho-(1'-sn-glycerol) is bound at residue arginine 142.

This sequence belongs to the Lgt family.

The protein resides in the cell inner membrane. It carries out the reaction L-cysteinyl-[prolipoprotein] + a 1,2-diacyl-sn-glycero-3-phospho-(1'-sn-glycerol) = an S-1,2-diacyl-sn-glyceryl-L-cysteinyl-[prolipoprotein] + sn-glycerol 1-phosphate + H(+). It functions in the pathway protein modification; lipoprotein biosynthesis (diacylglyceryl transfer). Catalyzes the transfer of the diacylglyceryl group from phosphatidylglycerol to the sulfhydryl group of the N-terminal cysteine of a prolipoprotein, the first step in the formation of mature lipoproteins. The polypeptide is Phosphatidylglycerol--prolipoprotein diacylglyceryl transferase (Cupriavidus pinatubonensis (strain JMP 134 / LMG 1197) (Cupriavidus necator (strain JMP 134))).